The chain runs to 254 residues: 21S rRNA pseudouridine(2819) synthase (254 aa).

D71 is a catalytic residue.

The protein belongs to the pseudouridine synthase RluA family.

Its subcellular location is the mitochondrion. The enzyme catalyses uridine(2819) in 21S rRNA = pseudouridine(2819) in 21S rRNA. In terms of biological role, pseudouridylate synthase responsible for the pseudouridine-2819 formation in mitochondrial 21S rRNA. May modulate the efficiency or the fidelity of the mitochondrial translation machinery. This chain is 21S rRNA pseudouridine(2819) synthase (PUS5), found in Saccharomyces cerevisiae (strain ATCC 204508 / S288c) (Baker's yeast).